A 344-amino-acid chain; its full sequence is L-rhamnose-proton symporter (344 aa).

A run of 10 helical transmembrane segments spans residues 4-24, 38-58, 68-88, 101-121, 131-151, 175-195, 214-234, 259-279, 290-310, and 321-341; these read AITMGIFWHLIGAASAACFYA, WSVGGIVSWLILPWTISALLL, FNLSTLLPVFLFGAMWGIGNI, MGIGIAIGITLIVGTLMTPII, TEGGHMTLLGVFVALIGVGIV, LLLAVMCGIFSAGMSFAMNAA, LPSYVVIMGGGALVNLGFCFI, ILLSALGGLMWYLQFFFYAWG, MSWMLHMSFYVLCGGLVGLVL, and VAVLSLGCVVIIIAANIVGLG.

The protein belongs to the L-rhamnose transporter (TC 2.A.7.6) family.

Its subcellular location is the cell inner membrane. The enzyme catalyses L-rhamnopyranose(in) + H(+)(in) = L-rhamnopyranose(out) + H(+)(out). Uptake of L-rhamnose across the cytoplasmic membrane with the concomitant transport of protons into the cell (symport system). In Salmonella typhi, this protein is L-rhamnose-proton symporter.